Here is a 329-residue protein sequence, read N- to C-terminus: DNA-directed RNA polymerase subunit alpha (329 aa).

Residues M1–R235 are alpha N-terminal domain (alpha-NTD). The interval F249–N329 is alpha C-terminal domain (alpha-CTD).

Belongs to the RNA polymerase alpha chain family. Homodimer. The RNAP catalytic core consists of 2 alpha, 1 beta, 1 beta' and 1 omega subunit. When a sigma factor is associated with the core the holoenzyme is formed, which can initiate transcription.

It carries out the reaction RNA(n) + a ribonucleoside 5'-triphosphate = RNA(n+1) + diphosphate. In terms of biological role, DNA-dependent RNA polymerase catalyzes the transcription of DNA into RNA using the four ribonucleoside triphosphates as substrates. This is DNA-directed RNA polymerase subunit alpha from Tolumonas auensis (strain DSM 9187 / NBRC 110442 / TA 4).